Here is a 292-residue protein sequence, read N- to C-terminus: Poly-beta-1,6-N-acetyl-D-glucosamine N-deacetylase (292 aa).

The N-terminal stretch at 1-28 is a signal peptide; that stretch reads MKYRKFIILVLSILIILPVSTLDGHHIA. The 179-residue stretch at 114–292 folds into the NodB homology domain; that stretch reads RSVWINFDDM…WDGFHEKDET (179 aa).

This sequence belongs to the polysaccharide deacetylase family.

The protein localises to the secreted. The protein resides in the cell wall. Its function is as follows. Catalyzes the N-deacetylation of poly-beta-1,6-N-acetyl-D-glucosamine (PNAG, also referred to as PIA), a biofilm adhesin polysaccharide. N-deacetylation is crucial for attachment of the polysaccharide to the bacterial cell surface; it leads to the introduction of positive charges in the otherwise neutral PIA polymer, allowing electrostatic interactions. In Staphylococcus aureus (strain COL), this protein is Poly-beta-1,6-N-acetyl-D-glucosamine N-deacetylase (icaB).